A 380-amino-acid chain; its full sequence is DNA replication and repair protein RecF (380 aa).

30-37 (GPNGFGKT) is an ATP binding site.

The protein belongs to the RecF family.

The protein resides in the cytoplasm. Functionally, the RecF protein is involved in DNA metabolism; it is required for DNA replication and normal SOS inducibility. RecF binds preferentially to single-stranded, linear DNA. It also seems to bind ATP. This is DNA replication and repair protein RecF from Mycobacterium sp. (strain KMS).